We begin with the raw amino-acid sequence, 453 residues long: Probable glycine dehydrogenase (decarboxylating) subunit 1 (453 aa).

Belongs to the GcvP family. N-terminal subunit subfamily. In terms of assembly, the glycine cleavage system is composed of four proteins: P, T, L and H. In this organism, the P 'protein' is a heterodimer of two subunits.

The enzyme catalyses N(6)-[(R)-lipoyl]-L-lysyl-[glycine-cleavage complex H protein] + glycine + H(+) = N(6)-[(R)-S(8)-aminomethyldihydrolipoyl]-L-lysyl-[glycine-cleavage complex H protein] + CO2. In terms of biological role, the glycine cleavage system catalyzes the degradation of glycine. The P protein binds the alpha-amino group of glycine through its pyridoxal phosphate cofactor; CO(2) is released and the remaining methylamine moiety is then transferred to the lipoamide cofactor of the H protein. The polypeptide is Probable glycine dehydrogenase (decarboxylating) subunit 1 (Methylococcus capsulatus (strain ATCC 33009 / NCIMB 11132 / Bath)).